The sequence spans 203 residues: Transmembrane protein 269 (203 aa).

Helical transmembrane passes span 60–80 (GLAS…LAII), 124–144 (FILC…SYYP), and 157–177 (LVYI…SAFY).

It localises to the membrane. The chain is Transmembrane protein 269 from Homo sapiens (Human).